The chain runs to 207 residues: ATP-dependent Clp protease proteolytic subunit (207 aa).

The active-site Nucleophile is Ser111. His136 is an active-site residue.

The protein belongs to the peptidase S14 family. Fourteen ClpP subunits assemble into 2 heptameric rings which stack back to back to give a disk-like structure with a central cavity, resembling the structure of eukaryotic proteasomes.

It is found in the cytoplasm. The enzyme catalyses Hydrolysis of proteins to small peptides in the presence of ATP and magnesium. alpha-casein is the usual test substrate. In the absence of ATP, only oligopeptides shorter than five residues are hydrolyzed (such as succinyl-Leu-Tyr-|-NHMec, and Leu-Tyr-Leu-|-Tyr-Trp, in which cleavage of the -Tyr-|-Leu- and -Tyr-|-Trp bonds also occurs).. In terms of biological role, cleaves peptides in various proteins in a process that requires ATP hydrolysis. Has a chymotrypsin-like activity. Plays a major role in the degradation of misfolded proteins. The protein is ATP-dependent Clp protease proteolytic subunit of Burkholderia mallei (strain ATCC 23344).